Reading from the N-terminus, the 213-residue chain is Pyrrolidone-carboxylate peptidase (213 aa).

Catalysis depends on residues Glu-80, Cys-143, and His-165.

Belongs to the peptidase C15 family. As to quaternary structure, homotetramer.

The protein resides in the cytoplasm. It carries out the reaction Release of an N-terminal pyroglutamyl group from a polypeptide, the second amino acid generally not being Pro.. In terms of biological role, removes 5-oxoproline from various penultimate amino acid residues except L-proline. The chain is Pyrrolidone-carboxylate peptidase from Erwinia tasmaniensis (strain DSM 17950 / CFBP 7177 / CIP 109463 / NCPPB 4357 / Et1/99).